Reading from the N-terminus, the 553-residue chain is Transcription factor MYB65 (553 aa).

The tract at residues 1–44 (MSYTTATADSDDGMHSSIHNESPAPDSISNGCRSRGKRSVLKKG) is disordered. 2 HTH myb-type domains span residues 38–90 (RSVL…ANHL) and 91–145 (RPNL…KRRQ). DNA-binding regions (H-T-H motif) lie at residues 66–90 (WNAV…ANHL) and 118–141 (WAQM…NTRI).

Mostly expressed in roots (e.g. root tips), stems, pollen, shoot apices, flowers and floral shoot tips, and, to a lower extent, in leaves and siliques.

Its subcellular location is the nucleus. In terms of biological role, transcriptional activator of alpha-amylase expression that binds to 5'-CAACTGTC-3' motif in target gene promoter. In vegetative tissues, inhibits growth by reducing cell proliferation. Promotes the expression of aleurone-related genes (e.g. CP1, CP, GASA1, BXL1 and BXL2) in seeds. Together with MYB33 and MYB101, promotes the programmed cell death (PCD) the vacuolation of protein storage vacuoles (PSVs) in the aleurone layers during seed germination. Together with MYB33, facilitates anther and tapetum development. The chain is Transcription factor MYB65 from Arabidopsis thaliana (Mouse-ear cress).